The chain runs to 143 residues: MNIYFCGSIRGGRQDVVIYQTIVKKLQQYGNVLTEHVSYDSLSDKGEDKDGDKAIHDRDVQWLTMSDVIVAEVTQPSLGVGYELGRAVAMNKRILCLFRPFSGKVLSAMIRGASAKPLFQVQDYKEDEVENILEEYFETLTKN.

Residues glycine 7, isoleucine 9, arginine 10, glycine 11, serine 77, glycine 79, glutamate 83, and serine 107 each contribute to the 5-hydroxymethyl-dUMP site.

The protein belongs to the 2'-deoxynucleoside 5'-phosphate N-hydrolase 1 family. As to quaternary structure, monomer and homodimer.

Its subcellular location is the cytoplasm. It localises to the nucleus. The enzyme catalyses 5-hydroxymethyl-dUMP + H2O = 5-hydroxymethyluracil + 2-deoxy-D-ribose 5-phosphate. In terms of biological role, part of a nucleotide salvage pathway that eliminates epigenetically modified 5-hydroxymethyl-dCMP (hmdCMP) in a two-step process entailing deamination to cytotoxic 5-hydroxymethyl-dUMP (hmdUMP), followed by its hydrolysis into 5-hydroxymethyluracil (hmU) and 2-deoxy-D-ribose 5-phosphate (deoxyribosephosphate). In Danio rerio (Zebrafish), this protein is 5-hydroxymethyl-dUMP N-hydrolase (dnph1).